The sequence spans 262 residues: uncharacterized protein (262 aa).

This is an uncharacterized protein from Mycobacterium tuberculosis (strain CDC 1551 / Oshkosh).